Consider the following 908-residue polypeptide: PTS system glucose-specific EIICBA component (908 aa).

The PTS EIIC type-1; first part domain maps to M1–G264. 5 helical membrane-spanning segments follow: residues L31 to I51, G71 to F91, F100 to V120, V155 to I175, and F189 to W209. The segment at G265–S450 is unknown. A PTS EIIC type-1; second part domain is found at L451 to G602. A run of 5 helical transmembrane segments spans residues G459–A479, A487–F507, F509–V529, L536–G556, and V571–I591. In terms of domain architecture, PTS EIIB type-1 spans Q631–W713. The active-site Phosphocysteine intermediate; for EIIB activity is the C653. The region spanning D762 to Q875 is the PTS EIIA type-1 domain. The active-site Tele-phosphohistidine intermediate; for EIIA activity is H815.

The protein localises to the cell membrane. The enzyme catalyses N(pros)-phospho-L-histidyl-[protein] + D-glucose(out) = D-glucose 6-phosphate(in) + L-histidyl-[protein]. Its function is as follows. The phosphoenolpyruvate-dependent sugar phosphotransferase system (sugar PTS), a major carbohydrate active transport system, catalyzes the phosphorylation of incoming sugar substrates concomitantly with their translocation across the cell membrane. This system is involved in glucose transport. The sequence is that of PTS system glucose-specific EIICBA component (ptsG) from Mycoplasma genitalium (strain ATCC 33530 / DSM 19775 / NCTC 10195 / G37) (Mycoplasmoides genitalium).